The sequence spans 328 residues: 4-hydroxythreonine-4-phosphate dehydrogenase (328 aa).

Substrate contacts are provided by His-130 and Thr-131. Positions 163, 208, and 263 each coordinate a divalent metal cation. 3 residues coordinate substrate: Lys-271, Asn-280, and Arg-289.

This sequence belongs to the PdxA family. Homodimer. Zn(2+) serves as cofactor. The cofactor is Mg(2+). Requires Co(2+) as cofactor.

Its subcellular location is the cytoplasm. It catalyses the reaction 4-(phosphooxy)-L-threonine + NAD(+) = 3-amino-2-oxopropyl phosphate + CO2 + NADH. It participates in cofactor biosynthesis; pyridoxine 5'-phosphate biosynthesis; pyridoxine 5'-phosphate from D-erythrose 4-phosphate: step 4/5. Its function is as follows. Catalyzes the NAD(P)-dependent oxidation of 4-(phosphooxy)-L-threonine (HTP) into 2-amino-3-oxo-4-(phosphooxy)butyric acid which spontaneously decarboxylates to form 3-amino-2-oxopropyl phosphate (AHAP). In Burkholderia vietnamiensis (strain G4 / LMG 22486) (Burkholderia cepacia (strain R1808)), this protein is 4-hydroxythreonine-4-phosphate dehydrogenase.